The sequence spans 140 residues: ATP synthase epsilon chain (140 aa).

Belongs to the ATPase epsilon chain family. In terms of assembly, F-type ATPases have 2 components, CF(1) - the catalytic core - and CF(0) - the membrane proton channel. CF(1) has five subunits: alpha(3), beta(3), gamma(1), delta(1), epsilon(1). CF(0) has three main subunits: a, b and c.

Its subcellular location is the cell inner membrane. Its function is as follows. Produces ATP from ADP in the presence of a proton gradient across the membrane. In Xanthomonas oryzae pv. oryzae (strain MAFF 311018), this protein is ATP synthase epsilon chain.